The primary structure comprises 447 residues: Nisin biosynthesis sensor protein NisK (447 aa).

2 consecutive transmembrane segments (helical) span residues 15–35 (VIEIIIGTCLLILLLLGLTFF) and 147–167 (TYLFFFLGEIILIIFSVYHLI). The Histidine kinase domain occupies 235-447 (ALSHDVKTPL…GAEVILKIKK (213 aa)). H238 is subject to Phosphohistidine; by autocatalysis.

It localises to the cell membrane. It catalyses the reaction ATP + protein L-histidine = ADP + protein N-phospho-L-histidine.. Functionally, member of the two-component regulatory system NisK/NisR involved in the regulation of the biosynthesis of lantibiotic nisin. NisK may function as a membrane-associated protein kinase that phosphorylates NisR in response to environmental signals. The chain is Nisin biosynthesis sensor protein NisK (nisK) from Lactococcus lactis subsp. lactis (Streptococcus lactis).